The primary structure comprises 229 residues: Ribonuclease 3 (229 aa).

One can recognise an RNase III domain in the interval 5–127 (LSRLERQLGY…LIGAIYLDAG (123 aa)). E40 provides a ligand contact to Mg(2+). D44 is an active-site residue. Residues D113 and E116 each contribute to the Mg(2+) site. Residue E116 is part of the active site. A DRBM domain is found at 154-224 (DPKTRLQEFL…AAAALIALGV (71 aa)).

Belongs to the ribonuclease III family. Homodimer. Requires Mg(2+) as cofactor.

The protein resides in the cytoplasm. It carries out the reaction Endonucleolytic cleavage to 5'-phosphomonoester.. In terms of biological role, digests double-stranded RNA. Involved in the processing of primary rRNA transcript to yield the immediate precursors to the large and small rRNAs (23S and 16S). Processes some mRNAs, and tRNAs when they are encoded in the rRNA operon. Processes pre-crRNA and tracrRNA of type II CRISPR loci if present in the organism. The protein is Ribonuclease 3 of Pseudomonas syringae pv. syringae (strain B728a).